Consider the following 253-residue polypeptide: 1-(5-phosphoribosyl)-5-[(5-phosphoribosylamino)methylideneamino] imidazole-4-carboxamide isomerase (253 aa).

Asp8 (proton acceptor) is an active-site residue. Asp131 acts as the Proton donor in catalysis.

The protein belongs to the HisA/HisF family.

It is found in the cytoplasm. It carries out the reaction 1-(5-phospho-beta-D-ribosyl)-5-[(5-phospho-beta-D-ribosylamino)methylideneamino]imidazole-4-carboxamide = 5-[(5-phospho-1-deoxy-D-ribulos-1-ylimino)methylamino]-1-(5-phospho-beta-D-ribosyl)imidazole-4-carboxamide. It participates in amino-acid biosynthesis; L-histidine biosynthesis; L-histidine from 5-phospho-alpha-D-ribose 1-diphosphate: step 4/9. This Polynucleobacter asymbioticus (strain DSM 18221 / CIP 109841 / QLW-P1DMWA-1) (Polynucleobacter necessarius subsp. asymbioticus) protein is 1-(5-phosphoribosyl)-5-[(5-phosphoribosylamino)methylideneamino] imidazole-4-carboxamide isomerase.